We begin with the raw amino-acid sequence, 473 residues long: Deoxyribodipyrimidine photo-lyase (473 aa).

In terms of domain architecture, Photolyase/cryptochrome alpha/beta spans 2–134; the sequence is PTHLVWFRRD…ICEGFDDSVI (133 aa). (6R)-5,10-methylene-5,6,7,8-tetrahydrofolate is bound by residues asparagine 109 and glutamate 110. Residue tyrosine 224 participates in FAD binding. Residue arginine 228 coordinates DNA. 236–240 lines the FAD pocket; the sequence is TSRLS. Interaction with DNA regions lie at residues 276 to 283 and 343 to 344; these read ELIWREFY and NR. 374-376 contributes to the FAD binding site; the sequence is DGD. A DNA-binding site is contributed by glutamine 406.

It belongs to the DNA photolyase class-1 family. As to quaternary structure, monomer. FAD is required as a cofactor. (6R)-5,10-methylene-5,6,7,8-tetrahydrofolate serves as cofactor.

It catalyses the reaction cyclobutadipyrimidine (in DNA) = 2 pyrimidine residues (in DNA).. In terms of biological role, involved in repair of UV radiation-induced DNA damage. Catalyzes the light-dependent monomerization (300-600 nm) of cyclobutyl pyrimidine dimers (in cis-syn configuration), which are formed between adjacent bases on the same DNA strand upon exposure to ultraviolet radiation. In Salmonella typhimurium (strain LT2 / SGSC1412 / ATCC 700720), this protein is Deoxyribodipyrimidine photo-lyase (phrB).